A 688-amino-acid chain; its full sequence is G protein-coupled receptor kinase 3 (688 aa).

An N-terminal region spans residues 1-190; it reads MADLEAVLAD…ELNIHLSMND (190 aa). An RGS domain is found at 54–175; that stretch reads TFDKIFNQKI…MESEKFTRFC (122 aa). The Protein kinase domain occupies 191-453; it reads FSVHRIIGRG…ARELKEHIFF (263 aa). Residues 197-205 and Lys-220 contribute to the ATP site; that span reads IGRGGFGEV. Residue Asp-317 is the Proton acceptor of the active site. An AGC-kinase C-terminal domain is found at 454–521; it reads KGIDWQYVYL…MISERWQQEV (68 aa). Positions 558-652 constitute a PH domain; the sequence is DCIMHGYMLK…WLKELTCTFN (95 aa).

The protein belongs to the protein kinase superfamily. AGC Ser/Thr protein kinase family. GPRK subfamily. Interacts with GIT1. Ubiquitinated. In terms of tissue distribution, expressed in brain cortex, hippocampus, striatum, hypothalamus, cerebellum and brainstem (at protein level).

The protein localises to the postsynapse. It localises to the presynapse. It catalyses the reaction [beta-adrenergic receptor] + ATP = [beta-adrenergic receptor]-phosphate + ADP + H(+). In terms of biological role, specifically phosphorylates the agonist-occupied form of the beta-adrenergic and closely related receptors. The sequence is that of G protein-coupled receptor kinase 3 from Rattus norvegicus (Rat).